A 481-amino-acid polypeptide reads, in one-letter code: Alpha-L-arabinofuranosidase 43 (481 aa).

Positions 1 to 19 (MRFSVFTAAIAAAFSACCA) are cleaved as a signal peptide. N-linked (GlcNAc...) asparagine glycans are attached at residues Asn-158, Asn-176, and Asn-365.

This sequence belongs to the glycosyl hydrolase 43 family.

It is found in the secreted. It catalyses the reaction Hydrolysis of terminal non-reducing alpha-L-arabinofuranoside residues in alpha-L-arabinosides.. Activity is significantly inhibited by SDS and partially inhibited by Ag(+), Fe(3+) and beta-mercaptoethanol. Its function is as follows. Alpha-L-arabinofuranosidase specific for the cleavage of alpha-1,3-linkage. Shows high activity against 4-nitrophenyl alpha-L-arabinofuranoside, debranched arabinan, and sugar beet arabinan. The polypeptide is Alpha-L-arabinofuranosidase 43 (Humicola insolens (Soft-rot fungus)).